The chain runs to 775 residues: Serine/threonine-protein kinase ppk6 (775 aa).

Residues S132 and S134 each carry the phosphoserine modification. The Protein kinase domain maps to 503 to 758; it reads YTTIKELGIG…IEETLQHHWF (256 aa). ATP-binding positions include 509–517 and K533; that span reads LGIGAYGQV. The active-site Proton acceptor is the D636.

It belongs to the protein kinase superfamily. Ser/Thr protein kinase family.

The protein resides in the cytoplasm. Its subcellular location is the nucleus. The enzyme catalyses L-seryl-[protein] + ATP = O-phospho-L-seryl-[protein] + ADP + H(+). It carries out the reaction L-threonyl-[protein] + ATP = O-phospho-L-threonyl-[protein] + ADP + H(+). The protein is Serine/threonine-protein kinase ppk6 (ppk6) of Schizosaccharomyces pombe (strain 972 / ATCC 24843) (Fission yeast).